Reading from the N-terminus, the 488-residue chain is N-succinylglutamate 5-semialdehyde dehydrogenase (488 aa).

Glycine 221–glycine 226 is an NAD(+) binding site. Active-site residues include glutamate 244 and cysteine 278.

It belongs to the aldehyde dehydrogenase family. AstD subfamily.

It carries out the reaction N-succinyl-L-glutamate 5-semialdehyde + NAD(+) + H2O = N-succinyl-L-glutamate + NADH + 2 H(+). The protein operates within amino-acid degradation; L-arginine degradation via AST pathway; L-glutamate and succinate from L-arginine: step 4/5. Catalyzes the NAD-dependent reduction of succinylglutamate semialdehyde into succinylglutamate. In Pseudomonas syringae pv. syringae (strain B728a), this protein is N-succinylglutamate 5-semialdehyde dehydrogenase.